A 242-amino-acid chain; its full sequence is Biosynthetic peptidoglycan transglycosylase (242 aa).

A helical membrane pass occupies residues 19–39 (LMVVLAIFWGGGIALFSVAPV).

This sequence belongs to the glycosyltransferase 51 family.

The protein localises to the cell inner membrane. It catalyses the reaction [GlcNAc-(1-&gt;4)-Mur2Ac(oyl-L-Ala-gamma-D-Glu-L-Lys-D-Ala-D-Ala)](n)-di-trans,octa-cis-undecaprenyl diphosphate + beta-D-GlcNAc-(1-&gt;4)-Mur2Ac(oyl-L-Ala-gamma-D-Glu-L-Lys-D-Ala-D-Ala)-di-trans,octa-cis-undecaprenyl diphosphate = [GlcNAc-(1-&gt;4)-Mur2Ac(oyl-L-Ala-gamma-D-Glu-L-Lys-D-Ala-D-Ala)](n+1)-di-trans,octa-cis-undecaprenyl diphosphate + di-trans,octa-cis-undecaprenyl diphosphate + H(+). Its pathway is cell wall biogenesis; peptidoglycan biosynthesis. Peptidoglycan polymerase that catalyzes glycan chain elongation from lipid-linked precursors. In Escherichia coli O81 (strain ED1a), this protein is Biosynthetic peptidoglycan transglycosylase.